Here is a 250-residue protein sequence, read N- to C-terminus: Pyrroloquinoline-quinone synthase (250 aa).

It belongs to the PqqC family.

The enzyme catalyses 6-(2-amino-2-carboxyethyl)-7,8-dioxo-1,2,3,4,7,8-hexahydroquinoline-2,4-dicarboxylate + 3 O2 = pyrroloquinoline quinone + 2 H2O2 + 2 H2O + H(+). It participates in cofactor biosynthesis; pyrroloquinoline quinone biosynthesis. Ring cyclization and eight-electron oxidation of 3a-(2-amino-2-carboxyethyl)-4,5-dioxo-4,5,6,7,8,9-hexahydroquinoline-7,9-dicarboxylic-acid to PQQ. This chain is Pyrroloquinoline-quinone synthase, found in Xanthomonas euvesicatoria pv. vesicatoria (strain 85-10) (Xanthomonas campestris pv. vesicatoria).